A 238-amino-acid polypeptide reads, in one-letter code: Tyrosine recombinase XerD-like (238 aa).

A Core-binding (CB) domain is found at 1 to 75 (MKLPNEIEEY…SANQYFLFLY (75 aa)). The Tyr recombinase domain maps to 90–238 (VQKKTQSSES…TITALEKYYR (149 aa)). Residues Lys-154 and Arg-204 contribute to the active site. Tyr-236 acts as the O-(3'-phospho-DNA)-tyrosine intermediate in catalysis.

Belongs to the 'phage' integrase family. XerD-like subfamily.

The protein resides in the cytoplasm. Functionally, putative tyrosine recombinase. Not involved in the cutting and rejoining of the recombining DNA molecules on dif(SL) site. This chain is Tyrosine recombinase XerD-like, found in Lactococcus lactis subsp. cremoris (strain SK11).